The following is a 257-amino-acid chain: MLAKRIVPCLDVKEGKVVKGVQFRNHEIVGDIVPLAKRYAEEGADELVFYDITASAHDRVIDKSWISRVAEKIDIPFCVAGGIRTIEQAREKLAFGADKISINSPALTDPSLIARLQDEFGRQCIVIGIDSYYDASSDSYRVKQFTGDEAATKDTQWYTQDWVEEVQKQGCGEIVLNVMNQDGVRQGYDIKQLSMIRSICDVPLIASGGAGTMAHFRDVFSRANVDAALAASVFHKGIIDIQELKQYLKDNQIAVRV.

Catalysis depends on residues D11 and D130.

The protein belongs to the HisA/HisF family. As to quaternary structure, heterodimer of HisH and HisF.

Its subcellular location is the cytoplasm. It catalyses the reaction 5-[(5-phospho-1-deoxy-D-ribulos-1-ylimino)methylamino]-1-(5-phospho-beta-D-ribosyl)imidazole-4-carboxamide + L-glutamine = D-erythro-1-(imidazol-4-yl)glycerol 3-phosphate + 5-amino-1-(5-phospho-beta-D-ribosyl)imidazole-4-carboxamide + L-glutamate + H(+). It participates in amino-acid biosynthesis; L-histidine biosynthesis; L-histidine from 5-phospho-alpha-D-ribose 1-diphosphate: step 5/9. In terms of biological role, IGPS catalyzes the conversion of PRFAR and glutamine to IGP, AICAR and glutamate. The HisF subunit catalyzes the cyclization activity that produces IGP and AICAR from PRFAR using the ammonia provided by the HisH subunit. The chain is Imidazole glycerol phosphate synthase subunit HisF from Shewanella halifaxensis (strain HAW-EB4).